We begin with the raw amino-acid sequence, 174 residues long: MALHDFVKIDKSRFEDAVKAYFLWKELNALIKNSHNRGINFPETISETLLCAAMGFELNRGTGGDAREPKTQAIIESKATSNWDRDTTSFSPSENFDALYFLRLNQRDDELYIYNTGINSDDLKSIQVNKTQTLGDQQAQGRRPRFSVIKFIIEANDIEPVAKVELRTKKIIKL.

The catalysed reaction is Endonucleolytic cleavage of DNA to give specific double-stranded fragments with terminal 5'-phosphates.. In terms of biological role, a P subtype restriction enzyme that recognizes the double-stranded sequence 5'-GCNGC-3' and cleaves after C-2. The polypeptide is Type II restriction enzyme Bsp6I (Bacillus sp. (strain RFL6)).